A 211-amino-acid polypeptide reads, in one-letter code: Pyridoxine/pyridoxamine 5'-phosphate oxidase (211 aa).

Substrate is bound by residues 7-10 and Lys-65; that span reads RREY. FMN-binding positions include 60–65, 75–76, Arg-81, Lys-82, and Gln-104; these read RIVLLK and YT. The substrate site is built by Tyr-122, Arg-126, and Ser-130. FMN is bound by residues 139–140 and Trp-184; that span reads QS. Substrate is bound at residue 190–192; it reads RLH. Arg-194 serves as a coordination point for FMN.

It belongs to the pyridoxamine 5'-phosphate oxidase family. Homodimer. FMN is required as a cofactor.

It carries out the reaction pyridoxamine 5'-phosphate + O2 + H2O = pyridoxal 5'-phosphate + H2O2 + NH4(+). The catalysed reaction is pyridoxine 5'-phosphate + O2 = pyridoxal 5'-phosphate + H2O2. It functions in the pathway cofactor metabolism; pyridoxal 5'-phosphate salvage; pyridoxal 5'-phosphate from pyridoxamine 5'-phosphate: step 1/1. It participates in cofactor metabolism; pyridoxal 5'-phosphate salvage; pyridoxal 5'-phosphate from pyridoxine 5'-phosphate: step 1/1. Functionally, catalyzes the oxidation of either pyridoxine 5'-phosphate (PNP) or pyridoxamine 5'-phosphate (PMP) into pyridoxal 5'-phosphate (PLP). The protein is Pyridoxine/pyridoxamine 5'-phosphate oxidase of Vibrio cholerae serotype O1 (strain ATCC 39315 / El Tor Inaba N16961).